A 756-amino-acid polypeptide reads, in one-letter code: Serine/threonine-protein kinase tousled-like 1-B (756 aa).

Composition is skewed to low complexity over residues 1–12 and 23–34; these read MSVQSNSNSSGS and STGSPTPGSVSP. Disordered stretches follow at residues 1 to 56 and 69 to 185; these read MSVQ…LDPR and VSGN…QNSS. Residues 45-56 are compositionally biased toward basic and acidic residues; it reads EGMDELHSLDPR. Residues 72 to 85 are compositionally biased toward gly residues; it reads NTGGSTGSASGGPK. Low complexity predominate over residues 93–103; it reads SSHSFGSLGSS. The segment covering 104 to 120 has biased composition (basic and acidic residues); the sequence is SDKESETPEKKHFESSR. Residues 243-268 are a coiled coil; the sequence is DLRRQIDEQQKLLERFKERLNKCTTM. The disordered stretch occupies residues 339-375; sequence KLLAKRKPSSTPSSQSPTPNESKQRKTKAVNGADNDP. Over residues 347-357 the composition is skewed to low complexity; that stretch reads SSTPSSQSPTP. A coiled-coil region spans residues 397 to 435; that stretch reads FKLRLGHLKKEEAEIQAELERLERVRNLHIRELKRINNE. Positions 450-728 constitute a Protein kinase domain; it reads YLLLHLLGRG…VHQLGSDSYL (279 aa). ATP is bound by residues 456 to 464 and Lys-479; that span reads LGRGGFSEV. Asp-580 acts as the Proton acceptor in catalysis. The disordered stretch occupies residues 734 to 756; the sequence is RSNSSGNLQATPASPAPSGIISY. The span at 735–745 shows a compositional bias: polar residues; sequence SNSSGNLQATP.

The protein belongs to the protein kinase superfamily. Ser/Thr protein kinase family. The cofactor is Mg(2+).

The protein localises to the nucleus. The enzyme catalyses L-seryl-[protein] + ATP = O-phospho-L-seryl-[protein] + ADP + H(+). It carries out the reaction L-threonyl-[protein] + ATP = O-phospho-L-threonyl-[protein] + ADP + H(+). This chain is Serine/threonine-protein kinase tousled-like 1-B (tlk1b), found in Danio rerio (Zebrafish).